The following is a 384-amino-acid chain: Spermidine/putrescine import ATP-binding protein PotA (384 aa).

An ABC transporter domain is found at isoleucine 6 to isoleucine 238. Glycine 40–serine 47 lines the ATP pocket.

Belongs to the ABC transporter superfamily. Spermidine/putrescine importer (TC 3.A.1.11.1) family. The complex is composed of two ATP-binding proteins (PotA), two transmembrane proteins (PotB and PotC) and a solute-binding protein (PotD).

It localises to the cell membrane. It catalyses the reaction ATP + H2O + polyamine-[polyamine-binding protein]Side 1 = ADP + phosphate + polyamineSide 2 + [polyamine-binding protein]Side 1.. In terms of biological role, part of the ABC transporter complex PotABCD involved in spermidine/putrescine import. Responsible for energy coupling to the transport system. The sequence is that of Spermidine/putrescine import ATP-binding protein PotA from Streptococcus pyogenes serotype M28 (strain MGAS6180).